Here is a 646-residue protein sequence, read N- to C-terminus: 1-deoxy-D-xylulose-5-phosphate synthase (646 aa).

Residues H86 and 127–129 contribute to the thiamine diphosphate site; that span reads AHS. D158 provides a ligand contact to Mg(2+). Residues 159-160, N188, Y295, and E377 contribute to the thiamine diphosphate site; that span reads GA. N188 lines the Mg(2+) pocket.

This sequence belongs to the transketolase family. DXPS subfamily. Homodimer. The cofactor is Mg(2+). It depends on thiamine diphosphate as a cofactor.

It catalyses the reaction D-glyceraldehyde 3-phosphate + pyruvate + H(+) = 1-deoxy-D-xylulose 5-phosphate + CO2. The protein operates within metabolic intermediate biosynthesis; 1-deoxy-D-xylulose 5-phosphate biosynthesis; 1-deoxy-D-xylulose 5-phosphate from D-glyceraldehyde 3-phosphate and pyruvate: step 1/1. In terms of biological role, catalyzes the acyloin condensation reaction between C atoms 2 and 3 of pyruvate and glyceraldehyde 3-phosphate to yield 1-deoxy-D-xylulose-5-phosphate (DXP). This chain is 1-deoxy-D-xylulose-5-phosphate synthase, found in Burkholderia cenocepacia (strain HI2424).